Reading from the N-terminus, the 887-residue chain is MKRQSERDSSPSGRGSSSSAKRPREREREAEAGGRRAAHKASGGTKHPVPARARDKPRGSGGGGGHRDGRAAGDANHRASGGRSSGAPGGGGRTGKASGDPGAGGASPRASPLPPPPPPPGAEPAGPGSTAAPEYKTLLISSLSPALPAEHLEDRLFHQFKRFGEISLRLSHTPELGRVAYVNFRHPQDAREARQHALARQLLLYDRPLKVEPVYLRGGGSSRRSSSSSAAASTPPPGPPAPADPLGYLPLHGGYQYKQRSLSPVAAPPLREPRARHAAAAFALDAAAAAAVGLSRERALDYYGLYDDRGRPYGYQAVCEEDLMPEDDQRATRNLFIGNLDHSVSEVELRRAFEKYGIIEEVVIKRPARGQGGAYAFLKFQNLDMAHRAKVAMSGRVIGRNPIKIGYGKANPTTRLWVGGLGPNTSLAALAREFDRFGSIRTIDHVKGDSFAYIQYESLDAAQAACAKMRGFPLGGPDRRLRVDFAKAEETRYPQQYQPSPLPVHYELLTDGYTRHRNLDADLRVRDRTPPHLLYSDRDRTFLEGDWTSLSKSSDRRNSLEGYSRSVRSRSGERWGGDGDRSIAKPWEERRKRRSLSSDRGRTTHSPYEERSRTKGGGQQSERGSDRTPERSRKENHSSEGTKESGSNSLSNSRHGAEERSHHHHHHEAPDSSHGKKTRESERNHRTTEAEPKTLEEPKHETKKLKTLSEYAQTLQLGWNGLLVLKNSCFPTSMHILEGDQGVISGLLKDHPSGSKLTQLKIAQRLRLDQPKLDEVTRRIKQGSPNGYAVLLAIQSTPSGPGAEGMPVVEPGLQRRLLRNLVSYLKQKQAAGVISLPVGGSKGRDNTGMLYAFPPCDFSQQYLQSALRTLGKLEEEHMVIVIVRDTA.

Residues 1-132 form a disordered region; the sequence is MKRQSERDSS…EPAGPGSTAA (132 aa). Positions 10-20 are enriched in low complexity; that stretch reads SPSGRGSSSSA. 2 stretches are compositionally biased toward basic and acidic residues: residues 22–34 and 65–77; these read RPRE…EAGG and GHRD…DANH. Positions 83–94 are enriched in gly residues; that stretch reads RSSGAPGGGGRT. Positions 95–110 are enriched in low complexity; it reads GKASGDPGAGGASPRA. Phosphoserine is present on residues Ser-107 and Ser-111. A compositionally biased stretch (pro residues) spans 111–122; that stretch reads SPLPPPPPPPGA. Residues 123 to 132 show a composition bias toward low complexity; that stretch reads EPAGPGSTAA. Residues 136 to 216 enclose the RRM 1 domain; sequence KTLLISSLSP…RPLKVEPVYL (81 aa). Residue Lys-210 forms a Glycyl lysine isopeptide (Lys-Gly) (interchain with G-Cter in SUMO2) linkage. Residues 215–249 form a disordered region; it reads YLRGGGSSRRSSSSSAAASTPPPGPPAPADPLGYL. Residues 222–233 are compositionally biased toward low complexity; the sequence is SRRSSSSSAAAS. Over residues 234–243 the composition is skewed to pro residues; sequence TPPPGPPAPA. Phosphoserine is present on residues Ser-261 and Ser-263. RRM domains lie at 333-410 and 414-488; these read RNLF…YGKA and TRLW…FAKA. Thr-529 is subject to Phosphothreonine. 3 positions are modified to phosphoserine: Ser-549, Ser-553, and Ser-559. Residues 549–703 form a disordered region; the sequence is SLSKSSDRRN…TLEEPKHETK (155 aa). Basic and acidic residues-rich tracts occupy residues 570–613, 623–643, and 668–700; these read RSGE…ERSR, RGSD…EGTK, and EAPD…EPKH. The Nuclear localization signal motif lies at 590–594; the sequence is RRKRR. A Glycyl lysine isopeptide (Lys-Gly) (interchain with G-Cter in SUMO2) cross-link involves residue Lys-699. An SPOC domain is found at 708 to 886; sequence LSEYAQTLQL…HMVIVIVRDT (179 aa). Residues 719–887 form an interaction with Epstein-Barr virus BMLF1 region; sequence WNGLLVLKNS…MVIVIVRDTA (169 aa).

Belongs to the RRM Spen family. Component of the WMM complex, a N6-methyltransferase complex composed of a catalytic subcomplex, named MAC, and of an associated subcomplex, named MACOM. The MAC subcomplex is composed of METTL3 and METTL14. The MACOM subcomplex is composed of WTAP, ZC3H13, CBLL1/HAKAI, VIRMA, and, in some cases of RBM15 (RBM15 or RBM15B). May interact with NCOR2. Interacts with NXF1, the interaction is required to promote mRNA export.

It localises to the nucleus. The protein resides in the nucleoplasm. The protein localises to the nucleus speckle. Its subcellular location is the nucleus envelope. In terms of biological role, RNA-binding protein that acts as a key regulator of N6-methyladenosine (m6A) methylation of RNAs, thereby regulating different processes, such as alternative splicing of mRNAs and X chromosome inactivation mediated by Xist RNA. Associated component of the WMM complex, a complex that mediates N6-methyladenosine (m6A) methylation of RNAs, a modification that plays a role in the efficiency of mRNA splicing and RNA processing. Plays a key role in m6A methylation, possibly by binding target RNAs and recruiting the WMM complex. Involved in random X inactivation mediated by Xist RNA: acts by binding Xist RNA and recruiting the WMM complex, which mediates m6A methylation, leading to target YTHDC1 reader on Xist RNA and promoting transcription repression activity of Xist. Functions in the regulation of alternative or illicit splicing, possibly by regulating m6A methylation. Inhibits pre-mRNA splicing. Also functions as a mRNA export factor by acting as a cofactor for the nuclear export receptor NXF1. The polypeptide is Putative RNA-binding protein 15B (Rbm15b) (Mus musculus (Mouse)).